A 343-amino-acid polypeptide reads, in one-letter code: LRP2-binding protein (343 aa).

One copy of the TPR repeat lies at 58–91 (SQATFLLGQLHYVQGCYAEAELIFDRIKDKDPQA). Sel1-like repeat units lie at residues 92 to 124 (LYQLAVIYYDGLGTKEDLGRAVEYMGRVAFWDS), 132 to 167 (YAALYNLGQAYLEGFGVQASSSEAERLWLLAADNGN), 172 to 205 (VKAQSALGMFYSRPESLDLRKAFFWHSQACGNGS), 206 to 241 (LESQAALGLMYLYGHGVQRDSDSALFCLKEAAERGS), 242 to 273 (VYAQGHLTACYYRRQLYSRAAALGQRVCEYKD), and 293 to 328 (AIGMFYYARCLHLGRGVPQNRDKAKHYCTQAVRIDP).

It localises to the cytoplasm. Functionally, may act as an adapter that regulates LRP2 function. The chain is LRP2-binding protein (lrp2bp) from Danio rerio (Zebrafish).